Here is a 492-residue protein sequence, read N- to C-terminus: GMP reductase (492 aa).

NADP(+)-binding positions include 30-31 (SR) and Arg-78. CBS domains are found at residues 99 to 162 (LIED…LVET) and 164 to 223 (MTPV…RNAT). Residues 260-262 (DIA) and 313-314 (VG) contribute to the NADP(+) site. Residues Gly-314, Gly-316, and Cys-319 each contribute to the K(+) site. Cys-319 (thioimidate intermediate) is an active-site residue. Thr-321 functions as the Proton donor/acceptor in the catalytic mechanism. Arg-322 lines the K(+) pocket. GMP contacts are provided by residues 352–354 (DGG), 375–376 (GN), and 401–403 (GMA). Residues Met-402 and 454-457 (SGIS) contribute to the NADP(+) site. The short motif at 490–492 (SKL) is the Microbody targeting signal element.

It belongs to the IMPDH/GMPR family. GuaC type 1 subfamily. In terms of assembly, homotetramer.

It is found in the glycosome. The enzyme catalyses IMP + NH4(+) + NADP(+) = GMP + NADPH + 2 H(+). With respect to regulation, activated by GTP and inhibited by XMP and the IMP analogs allopurinol nucleotide and thiopurinol nucleotide. Catalyzes the irreversible NADPH-dependent deamination of GMP to IMP. It functions in the conversion of nucleobase, nucleoside and nucleotide derivatives of G to A nucleotides, and in maintaining the intracellular balance of A and G nucleotides. This is GMP reductase from Leishmania donovani.